Here is a 304-residue protein sequence, read N- to C-terminus: Signal recognition particle receptor FtsY (304 aa).

Residues Gly109–Thr116, Asp191–Arg195, and Thr255–Asp258 contribute to the GTP site.

The protein belongs to the GTP-binding SRP family. FtsY subfamily. As to quaternary structure, part of the signal recognition particle protein translocation system, which is composed of SRP and FtsY. Sensitive to endogenous proteolytic cleavage between residues 18 and 19 and between residues 86 and 87.

Its subcellular location is the cell membrane. It localises to the cytoplasm. It carries out the reaction GTP + H2O = GDP + phosphate + H(+). Its function is as follows. Involved in targeting and insertion of nascent membrane proteins into the cytoplasmic membrane. Acts as a receptor for the complex formed by the signal recognition particle (SRP) and the ribosome-nascent chain (RNC). In Thermus aquaticus, this protein is Signal recognition particle receptor FtsY.